We begin with the raw amino-acid sequence, 20 residues long: Outer membrane protein 40Va (20 aa).

It belongs to the Gram-negative porin family. Homotrimer.

The protein localises to the cell outer membrane. In terms of biological role, forms pores that allow passive diffusion of small molecules across the outer membrane. This Vibrio alginolyticus protein is Outer membrane protein 40Va.